The primary structure comprises 566 residues: Putative ABC transporter ATP-binding protein BC_2655 (566 aa).

ABC transporter domains follow at residues 5 to 246 and 300 to 533; these read ISFE…GLRE and LKVE…ANLR. Residues 39-46 and 333-340 each bind ATP; these read GRSGSGKS and GHNGAGKS.

This sequence belongs to the ABC transporter superfamily.

The protein localises to the cell membrane. In terms of biological role, probably part of an ABC transporter complex. Responsible for energy coupling to the transport system. The chain is Putative ABC transporter ATP-binding protein BC_2655 from Bacillus cereus (strain ATCC 14579 / DSM 31 / CCUG 7414 / JCM 2152 / NBRC 15305 / NCIMB 9373 / NCTC 2599 / NRRL B-3711).